We begin with the raw amino-acid sequence, 321 residues long: Glucokinase (321 aa).

8-13 is a binding site for ATP; it reads GDVGGT.

The protein belongs to the bacterial glucokinase family.

The protein resides in the cytoplasm. It carries out the reaction D-glucose + ATP = D-glucose 6-phosphate + ADP + H(+). The protein is Glucokinase of Salmonella heidelberg (strain SL476).